A 225-amino-acid chain; its full sequence is Phosphatidylserine decarboxylase proenzyme (225 aa).

Residue serine 195 is the Schiff-base intermediate with substrate; via pyruvic acid of the active site. Serine 195 carries the post-translational modification Pyruvic acid (Ser); by autocatalysis.

It belongs to the phosphatidylserine decarboxylase family. PSD-A subfamily. Heterodimer of a large membrane-associated beta subunit and a small pyruvoyl-containing alpha subunit. Pyruvate serves as cofactor. Is synthesized initially as an inactive proenzyme. Formation of the active enzyme involves a self-maturation process in which the active site pyruvoyl group is generated from an internal serine residue via an autocatalytic post-translational modification. Two non-identical subunits are generated from the proenzyme in this reaction, and the pyruvate is formed at the N-terminus of the alpha chain, which is derived from the carboxyl end of the proenzyme. The post-translation cleavage follows an unusual pathway, termed non-hydrolytic serinolysis, in which the side chain hydroxyl group of the serine supplies its oxygen atom to form the C-terminus of the beta chain, while the remainder of the serine residue undergoes an oxidative deamination to produce ammonia and the pyruvoyl prosthetic group on the alpha chain.

The protein localises to the cell membrane. It catalyses the reaction a 1,2-diacyl-sn-glycero-3-phospho-L-serine + H(+) = a 1,2-diacyl-sn-glycero-3-phosphoethanolamine + CO2. Its pathway is phospholipid metabolism; phosphatidylethanolamine biosynthesis; phosphatidylethanolamine from CDP-diacylglycerol: step 2/2. Functionally, catalyzes the formation of phosphatidylethanolamine (PtdEtn) from phosphatidylserine (PtdSer). The chain is Phosphatidylserine decarboxylase proenzyme from Gluconacetobacter diazotrophicus (strain ATCC 49037 / DSM 5601 / CCUG 37298 / CIP 103539 / LMG 7603 / PAl5).